A 282-amino-acid chain; its full sequence is Elongation factor Ts (282 aa).

Residues 80–83 form an involved in Mg(2+) ion dislocation from EF-Tu region; it reads TDFV.

Belongs to the EF-Ts family.

Its subcellular location is the cytoplasm. Functionally, associates with the EF-Tu.GDP complex and induces the exchange of GDP to GTP. It remains bound to the aminoacyl-tRNA.EF-Tu.GTP complex up to the GTP hydrolysis stage on the ribosome. This chain is Elongation factor Ts (tsf), found in Chlamydia trachomatis serovar D (strain ATCC VR-885 / DSM 19411 / UW-3/Cx).